We begin with the raw amino-acid sequence, 273 residues long: Coiled-coil domain-containing protein 122 (273 aa).

Residues 1–17 (MSDNKERKSQGFPKEDN) show a composition bias toward basic and acidic residues. A disordered region spans residues 1–39 (MSDNKERKSQGFPKEDNQDTSSLADAVEKVAKQQQSQAS). Coiled coils occupy residues 24–116 (ADAV…TAQE) and 179–269 (NRIT…RKCI).

This is Coiled-coil domain-containing protein 122 (CCDC122) from Homo sapiens (Human).